A 584-amino-acid polypeptide reads, in one-letter code: 2-succinyl-5-enolpyruvyl-6-hydroxy-3-cyclohexene-1-carboxylate synthase (584 aa).

Belongs to the TPP enzyme family. MenD subfamily. In terms of assembly, homodimer. Mg(2+) is required as a cofactor. Mn(2+) serves as cofactor. The cofactor is thiamine diphosphate.

It catalyses the reaction isochorismate + 2-oxoglutarate + H(+) = 5-enolpyruvoyl-6-hydroxy-2-succinyl-cyclohex-3-ene-1-carboxylate + CO2. Its pathway is quinol/quinone metabolism; 1,4-dihydroxy-2-naphthoate biosynthesis; 1,4-dihydroxy-2-naphthoate from chorismate: step 2/7. It participates in quinol/quinone metabolism; menaquinone biosynthesis. Catalyzes the thiamine diphosphate-dependent decarboxylation of 2-oxoglutarate and the subsequent addition of the resulting succinic semialdehyde-thiamine pyrophosphate anion to isochorismate to yield 2-succinyl-5-enolpyruvyl-6-hydroxy-3-cyclohexene-1-carboxylate (SEPHCHC). The polypeptide is 2-succinyl-5-enolpyruvyl-6-hydroxy-3-cyclohexene-1-carboxylate synthase (Bacillus thuringiensis subsp. konkukian (strain 97-27)).